A 284-amino-acid chain; its full sequence is 1D-myo-inositol 2-acetamido-2-deoxy-alpha-D-glucopyranoside deacetylase (284 aa).

Zn(2+)-binding residues include His-12, Asp-15, and His-146.

The protein belongs to the MshB deacetylase family. Requires Zn(2+) as cofactor.

The enzyme catalyses 1D-myo-inositol 2-acetamido-2-deoxy-alpha-D-glucopyranoside + H2O = 1D-myo-inositol 2-amino-2-deoxy-alpha-D-glucopyranoside + acetate. In terms of biological role, catalyzes the deacetylation of 1D-myo-inositol 2-acetamido-2-deoxy-alpha-D-glucopyranoside (GlcNAc-Ins) in the mycothiol biosynthesis pathway. This is 1D-myo-inositol 2-acetamido-2-deoxy-alpha-D-glucopyranoside deacetylase from Mycolicibacterium gilvum (strain PYR-GCK) (Mycobacterium gilvum (strain PYR-GCK)).